The primary structure comprises 245 residues: Complement C1q subcomponent subunit A (245 aa).

Positions 1–22 (METSQGWLVACVLTMTLVWTVA) are cleaved as a signal peptide. The interval 28–114 (APNGKDGAPG…NPGNIRDQPR (87 aa)) is disordered. Residues 31–109 (GKDGAPGNPG…KGVKGNPGNI (79 aa)) form the Collagen-like domain. Residues Pro39 and Pro45 each carry the 4-hydroxyproline modification. At Lys48 the chain carries 5-hydroxylysine. Residue Lys48 is glycosylated (O-linked (Gal...) hydroxylysine; alternate). 4-hydroxyproline is present on Pro54. Lys67 is subject to 5-hydroxylysine. O-linked (Gal...) hydroxylysine; alternate glycosylation is present at Lys67. 4-hydroxyproline occurs at positions 79 and 85. A compositionally biased stretch (low complexity) spans 79 to 99 (PGNVGLPGPSGPLGDSGPQGL). Position 100 is a 5-hydroxylysine (Lys100). An O-linked (Gal...) hydroxylysine; alternate glycan is attached at Lys100. Residues 110-245 (RDQPRPAFSA…FSGFLIFPSA (136 aa)) enclose the C1q domain. Asn146 carries N-linked (GlcNAc...) asparagine glycosylation. Gln199 contributes to the Ca(2+) binding site.

As to quaternary structure, core component of the complement C1 complex, a calcium-dependent complex composed of 1 molecule of the C1Q subcomplex, 2 molecules of C1R and 2 molecules of C1S. The C1Q subcomplex is composed 18 subunits: 3 chains of C1QA, C1QB, and C1QC trimerize to form 6 collagen-like triple helices connected to six globular ligand-recognition modules (C1q domain). Interacts with CR1 (via Sushi 24 and Sushi 25 domains). Interacts (via C-terminus) with CD33; this interaction activates CD33 inhibitory motifs. O-linked glycans are assumed to be the Glc-Gal disaccharides typically found as secondary modifications of hydroxylated lysines in collagen-like domains.

The protein localises to the secreted. Its subcellular location is the cell surface. With respect to regulation, the C1Q subcomplex is inhibited by sulfated molecules, such as triterpenoid sulfates, heparan sulfate, or chondroitin sulfates. In terms of biological role, core component of the complement C1 complex, a multiprotein complex that initiates the classical pathway of the complement system, a cascade of proteins that leads to phagocytosis and breakdown of pathogens and signaling that strengthens the adaptive immune system. The classical complement pathway is initiated by the C1Q subcomplex of the C1 complex, which specifically binds IgG or IgM immunoglobulins complexed with antigens, forming antigen-antibody complexes on the surface of pathogens: C1QA, together with C1QB and C1QC, specifically recognizes and binds the Fc regions of IgG or IgM via its C1q domain. Immunoglobulin-binding activates the proenzyme C1R, which cleaves C1S, initiating the proteolytic cascade of the complement system. The C1Q subcomplex is activated by a hexamer of IgG complexed with antigens, while it is activated by a pentameric IgM. The C1Q subcomplex also recognizes and binds phosphatidylserine exposed on the surface of cells undergoing programmed cell death, possibly promoting activation of the complement system. The polypeptide is Complement C1q subcomponent subunit A (Mus musculus (Mouse)).